An 82-amino-acid polypeptide reads, in one-letter code: Musculoskeletal embryonic nuclear protein 1 (82 aa).

2 disordered regions span residues 1 to 33 (MSQAGAQEAPIKKKRPPVKDEDLKGARGNLTKN) and 49 to 82 (QAGSAAPSVFSRTRTGTETVFEKPKAGPTKSVFG). At Ser-2 the chain carries Phosphoserine. The short motif at 10 to 18 (PIKKKRPPV) is the Nuclear localization signal element.

This sequence belongs to the MUSTN1 family. In terms of tissue distribution, expression in skeletal muscle is reduced during limb unloading but increases during the active recovery phase that follows.

It localises to the nucleus. Its subcellular location is the cytoplasm. The protein resides in the secreted. It is found in the extracellular space. In terms of biological role, required for chondrocyte development and proliferation. Plays a role in myoblast differentiation and fusion. Modulates skeletal muscle extracellular matrix composition. Plays a role in skeletal muscle function. Plays a role in glucose homeostasis. The protein is Musculoskeletal embryonic nuclear protein 1 (MUSTN1) of Homo sapiens (Human).